The primary structure comprises 152 residues: Protein SprT-like (152 aa).

Residues 13 to 148 (NYVKKVSIED…FACGYCHGRL (136 aa)) form the SprT-like domain. Residue His72 participates in Zn(2+) binding. Glu73 is a catalytic residue. His76 is a Zn(2+) binding site.

This sequence belongs to the SprT family. It depends on Zn(2+) as a cofactor.

The protein resides in the cytoplasm. This Streptococcus agalactiae serotype III (strain NEM316) protein is Protein SprT-like.